The following is a 359-amino-acid chain: tRNA-specific 2-thiouridylase MnmA (359 aa).

ATP is bound by residues 6–13 (AMSGGVDS) and L32. C101 serves as the catalytic Nucleophile. The cysteines at positions 101 and 193 are disulfide-linked. G125 is an ATP binding site. The segment at 143–145 (KDQ) is interaction with tRNA. The Cysteine persulfide intermediate role is filled by C193.

The protein belongs to the MnmA/TRMU family.

The protein resides in the cytoplasm. It carries out the reaction S-sulfanyl-L-cysteinyl-[protein] + uridine(34) in tRNA + AH2 + ATP = 2-thiouridine(34) in tRNA + L-cysteinyl-[protein] + A + AMP + diphosphate + H(+). Catalyzes the 2-thiolation of uridine at the wobble position (U34) of tRNA, leading to the formation of s(2)U34. This chain is tRNA-specific 2-thiouridylase MnmA, found in Mycobacterium sp. (strain KMS).